The chain runs to 281 residues: 2-dehydro-3-deoxyphosphooctonate aldolase (281 aa).

Belongs to the KdsA family.

The protein resides in the cytoplasm. The enzyme catalyses D-arabinose 5-phosphate + phosphoenolpyruvate + H2O = 3-deoxy-alpha-D-manno-2-octulosonate-8-phosphate + phosphate. Its pathway is carbohydrate biosynthesis; 3-deoxy-D-manno-octulosonate biosynthesis; 3-deoxy-D-manno-octulosonate from D-ribulose 5-phosphate: step 2/3. The protein operates within bacterial outer membrane biogenesis; lipopolysaccharide biosynthesis. This chain is 2-dehydro-3-deoxyphosphooctonate aldolase, found in Azotobacter vinelandii (strain DJ / ATCC BAA-1303).